The sequence spans 428 residues: MSYIGLQQDSGEYKIQKIHAREILDSRGNPTVEVDVFTPKGFGRASVPSGASTGTNEALELRDADPNRYGGKGVLTAVKNVNTIIQKELLGLDVRNQREIDELMIELDETENKSNLGANAILGVSMAVAKAAADSLNIPLYRYFGGSNAFTLPVPTMNVLNGGKHAGNELAIQEFMIQPKGAETFYEALQIGAEIYQTLGKFLENKYGRSSTNVGYEGGYAPKMGESTEALDALVHAIEEAGYTESEVTIGLDAAATEFYEEEFYNIDGKKLAAPELLDYYVELVNSYPILSIEDPFYEEAFEDFEALTNELWDTIIVGDDLFVTNIERLSKGVDMGAANALLLKVNQIGSISEAFDAASMASRNGYTVIVSHRSAETEDTTISDLAVAIGAEMIKTGAPARGERTAKYNQLLRIEEDLGEVAHYVQL.

A (2R)-2-phosphoglycerate-binding site is contributed by glutamine 173. Glutamate 217 acts as the Proton donor in catalysis. Mg(2+)-binding residues include aspartate 253, glutamate 294, and aspartate 320. (2R)-2-phosphoglycerate-binding residues include lysine 345, arginine 374, serine 375, and lysine 396. Lysine 345 functions as the Proton acceptor in the catalytic mechanism.

This sequence belongs to the enolase family. The cofactor is Mg(2+).

The protein resides in the cytoplasm. It is found in the secreted. The protein localises to the cell surface. The catalysed reaction is (2R)-2-phosphoglycerate = phosphoenolpyruvate + H2O. It participates in carbohydrate degradation; glycolysis; pyruvate from D-glyceraldehyde 3-phosphate: step 4/5. In terms of biological role, catalyzes the reversible conversion of 2-phosphoglycerate (2-PG) into phosphoenolpyruvate (PEP). It is essential for the degradation of carbohydrates via glycolysis. The chain is Enolase from Methanosarcina mazei (strain ATCC BAA-159 / DSM 3647 / Goe1 / Go1 / JCM 11833 / OCM 88) (Methanosarcina frisia).